A 530-amino-acid chain; its full sequence is Testis-expressed protein 44 (530 aa).

The segment covering 1–10 (MTAEPLEDPE) has biased composition (acidic residues). Disordered stretches follow at residues 1–85 (MTAE…FIRT), 207–233 (ATSA…TSLL), 256–290 (ENNR…QPVL), and 305–384 (QTSV…SPDF). Composition is skewed to polar residues over residues 11–26 (ASSS…SSDN), 222–233 (GQDNPEETTSLL), and 257–280 (NNRT…TLGN). Over residues 365–381 (PPDPPDPGSPGGSPPHS) the composition is skewed to pro residues. Ser-468 bears the Phosphoserine mark.

It localises to the cytoplasm. This Mus musculus (Mouse) protein is Testis-expressed protein 44 (Tex44).